The chain runs to 212 residues: uncharacterized protein (212 aa).

2 disordered regions span residues 1-148 and 168-190; these read MEKD…LNDL and EVVT…LSED. Residues 61-70 show a composition bias toward basic and acidic residues; sequence KELESEDQGK. A compositionally biased stretch (polar residues) spans 71–85; the sequence is DPSSNAEDASCQKNL. 3 stretches are compositionally biased toward basic and acidic residues: residues 99–115, 124–144, and 168–180; these read LGHE…KSDL, EGEH…ESIK, and EVVT…EKPS.

This is an uncharacterized protein from Homo sapiens (Human).